We begin with the raw amino-acid sequence, 176 residues long: Cytochrome b (176 aa).

A run of 3 helical transmembrane segments spans residues 33 to 53 (FGSLLGVCLIVQILTGLFLAM), 77 to 98 (WLLRYLHANGASMFFICLYLHI), and 113 to 133 (WNVGVILLFAVMATAFMGYVL). Residues His-83 and His-97 each coordinate heme b.

The protein belongs to the cytochrome b family. In terms of assembly, the cytochrome bc1 complex contains 11 subunits: 3 respiratory subunits (MT-CYB, CYC1 and UQCRFS1), 2 core proteins (UQCRC1 and UQCRC2) and 6 low-molecular weight proteins (UQCRH/QCR6, UQCRB/QCR7, UQCRQ/QCR8, UQCR10/QCR9, UQCR11/QCR10 and a cleavage product of UQCRFS1). This cytochrome bc1 complex then forms a dimer. Heme b serves as cofactor.

It localises to the mitochondrion inner membrane. In terms of biological role, component of the ubiquinol-cytochrome c reductase complex (complex III or cytochrome b-c1 complex) that is part of the mitochondrial respiratory chain. The b-c1 complex mediates electron transfer from ubiquinol to cytochrome c. Contributes to the generation of a proton gradient across the mitochondrial membrane that is then used for ATP synthesis. The chain is Cytochrome b (MT-CYB) from Nyctinomops aurispinosus (Peale's free-tailed bat).